A 95-amino-acid polypeptide reads, in one-letter code: Large ribosomal subunit protein bL25 (95 aa).

The protein belongs to the bacterial ribosomal protein bL25 family. Part of the 50S ribosomal subunit; part of the 5S rRNA/L5/L18/L25 subcomplex. Contacts the 5S rRNA. Binds to the 5S rRNA independently of L5 and L18.

In terms of biological role, this is one of the proteins that binds to the 5S RNA in the ribosome where it forms part of the central protuberance. The polypeptide is Large ribosomal subunit protein bL25 (Shewanella woodyi (strain ATCC 51908 / MS32)).